Reading from the N-terminus, the 573-residue chain is Probable zinc metallopeptidase EGY3, chloroplastic (573 aa).

The N-terminal 50 residues, 1–50 (MASLFVSTPSSSLTLKSCHSLHLRRFDRAEFSNFGKASVNQTTRSRHSLR), are a transit peptide targeting the chloroplast. Positions 38–105 (SVNQTTRSRH…EKKSKQQEMD (68 aa)) are disordered. Basic and acidic residues-rich tracts occupy residues 52-62 (SAEDDRVREPV) and 96-105 (EKKSKQQEMD). Residues 122–185 (EAAIKLEKTR…KALDLNKLKS (64 aa)) are a coiled coil. 7 consecutive transmembrane segments (helical) span residues 274 to 294 (VSAI…SGFF), 305 to 325 (IANV…SEIA), 376 to 396 (ASAY…DGSF), 414 to 434 (PLLS…GNVL), 441 to 461 (VGVP…VTSL), 493 to 513 (LLLG…GLFA), and 536 to 556 (FAWG…NSGG).

This sequence belongs to the peptidase M50B family.

Its subcellular location is the plastid. It localises to the chloroplast membrane. Its function is as follows. Probable membrane-associated metalloprotease that may be involved in chloroplast development. This Arabidopsis thaliana (Mouse-ear cress) protein is Probable zinc metallopeptidase EGY3, chloroplastic (EGY3).